We begin with the raw amino-acid sequence, 180 residues long: Major urinary protein 1 (180 aa).

A signal peptide spans 1-18 (MKMLLLLCLGLTLVCVHA). C82 and C175 form a disulfide bridge.

It belongs to the calycin superfamily. Lipocalin family. In terms of tissue distribution, abundant in the urine of adult male mice but absent from that of females.

The protein localises to the secreted. Binds pheromones that are released from drying urine of males. These pheromones affect the sexual behavior of females. This is Major urinary protein 1 (Mup1) from Mus musculus (Mouse).